Here is a 394-residue protein sequence, read N- to C-terminus: Putative serine protease HhoA (394 aa).

The first 24 residues, methionine 1–glycine 24, serve as a signal peptide directing secretion. Positions methionine 293–aspartate 377 constitute a PDZ domain.

It belongs to the peptidase S1C family.

It localises to the periplasm. In terms of biological role, a putative protease, its function overlaps that of the related putative proteases HhoB and HtrA. The protein is Putative serine protease HhoA (hhoA) of Synechocystis sp. (strain ATCC 27184 / PCC 6803 / Kazusa).